The chain runs to 62 residues: Coiled-coil domain-containing protein YLR146W-A (62 aa).

The stretch at 14-49 (EHARMLQNEIQQLFAQLRDTNSQIRCDLNEFEQIKE) forms a coiled coil.

The sequence is that of Coiled-coil domain-containing protein YLR146W-A from Saccharomyces cerevisiae (strain ATCC 204508 / S288c) (Baker's yeast).